The primary structure comprises 131 residues: MKCPVCHQGEMVSGIKDIPYTFRGRKTVLKGIHGLYCVHCEESIMNKEESDAFMAQVKAFRASVNAETVAPEFIVKVRKKLSLTQKEASEIFGGGVNAFSRYEKGNAQPHPSTIKLLRVLDKHPELLNEIR.

The Zn(2+) site is built by C3, C6, C37, and C40. In terms of domain architecture, HTH cro/C1-type spans 74-127 (IVKVRKKLSLTQKEASEIFGGGVNAFSRYEKGNAQPHPSTIKLLRVLDKHPELL). Residues 85-104 (QKEASEIFGGGVNAFSRYEK) constitute a DNA-binding region (H-T-H motif).

Homodimer. Crystallizes as a heterotetramer with MqsA, MqsR-MqsA(2)-MqsR. Purifies as a probable heterohexamer of 2 MqsR dimers and 1 MqsA dimer. Binds promoter DNA as a dimer. When the 2 dissociate the MsqR mRNA interferase becomes active. It depends on Zn(2+) as a cofactor. Post-translationally, degraded in the presence of oxidative stress, maybe by the Lon and/or ClpX proteases.

Its function is as follows. Antitoxin component of a type II toxin-antitoxin (TA) system. Labile antitoxin that binds to the MqsR mRNA interferase toxin and neutralizes its endoribonuclease activity. Overexpression prevents MqsR-mediated cessation of cell growth and inhibition of cell proliferation. Initially reported to act as a cotranscription factor with MqsA. Following further experiments, the MqsR-MqsA complex does not bind DNA and all reported data are actually due to a small fraction of free MqsA alone binding DNA. Addition of MqsR to a preformed MqsA-promoter DNA complex causes dissociation of the MqsA-DNA complex, probably causing derepression of MqsA-repressed transcripts. MqsA binds to 2 palindromes in the promoter region of the mqsRA operon activating its transcription. Binds to other promoters, inducing mcbR and spy and repressing cspD among others. Binds to and represses the rpoS promoter, the master stress regulator, resulting in decreased cyclic-di-GMP, reduced stress resistance, increased cell motility and decreased biofilm formation; in these experiments 5 TA systems are missing (lacks MazEF, RelEB, ChpB, YoeB-YefM, YafQ-DinJ). An earlier study showed overexpression alone increases biofilm formation, perhaps by repressing cspD; in these experiments the 5 TA systems are present. Represses the csgD promoter. In the presence of stress, when this protein is degraded, the promoters it represses are derepressed, leading to biofilm formation. This TA system mediates cell growth during bile acid deoxycholate stress by degrading mRNA for probable deoxycholate-binding protein YgiS; bile acid detergents such as deoxycholate are important for host defense against bacterial growth in the gall bladder and duodenum. This chain is Antitoxin MqsA, found in Escherichia coli (strain K12).